We begin with the raw amino-acid sequence, 305 residues long: Dihydroorotate dehydrogenase B (NAD(+)), catalytic subunit (305 aa).

Residues S21 and 45 to 46 contribute to the FMN site; that span reads KG. Substrate is bound by residues K45 and 69–73; that span reads NAVGL. The FMN site is built by N99 and N127. N127 is a binding site for substrate. C130 acts as the Nucleophile in catalysis. K165 and I191 together coordinate FMN. 192–193 is a binding site for substrate; that stretch reads NT. FMN-binding positions include G217, 243–244, and 265–266; these read GG and GT.

This sequence belongs to the dihydroorotate dehydrogenase family. Type 1 subfamily. In terms of assembly, heterotetramer of 2 PyrK and 2 PyrD type B subunits. FMN serves as cofactor.

It is found in the cytoplasm. The catalysed reaction is (S)-dihydroorotate + NAD(+) = orotate + NADH + H(+). The protein operates within pyrimidine metabolism; UMP biosynthesis via de novo pathway; orotate from (S)-dihydroorotate (NAD(+) route): step 1/1. Functionally, catalyzes the conversion of dihydroorotate to orotate with NAD(+) as electron acceptor. The sequence is that of Dihydroorotate dehydrogenase B (NAD(+)), catalytic subunit (pyrD) from Parabacteroides distasonis (strain ATCC 8503 / DSM 20701 / CIP 104284 / JCM 5825 / NCTC 11152).